Reading from the N-terminus, the 217-residue chain is 3,4-dihydroxy-2-butanone 4-phosphate synthase (217 aa).

D-ribulose 5-phosphate-binding positions include 37–38 (RE), D42, 150–154 (RRGHT), and E174. Residue E38 participates in Mg(2+) binding. Mg(2+) is bound at residue H153.

The protein belongs to the DHBP synthase family. In terms of assembly, homodimer. Mg(2+) serves as cofactor. It depends on Mn(2+) as a cofactor.

The enzyme catalyses D-ribulose 5-phosphate = (2S)-2-hydroxy-3-oxobutyl phosphate + formate + H(+). It participates in cofactor biosynthesis; riboflavin biosynthesis; 2-hydroxy-3-oxobutyl phosphate from D-ribulose 5-phosphate: step 1/1. Its function is as follows. Catalyzes the conversion of D-ribulose 5-phosphate to formate and 3,4-dihydroxy-2-butanone 4-phosphate. The protein is 3,4-dihydroxy-2-butanone 4-phosphate synthase of Shewanella baltica (strain OS223).